The chain runs to 319 residues: Protein-methionine methyltransferase laeA (319 aa).

Residues 269–293 form a disordered region; sequence REPQSGTCSVQRENGANGDRSTLSA. Positions 270 to 293 are enriched in polar residues; it reads EPQSGTCSVQRENGANGDRSTLSA.

The protein belongs to the methyltransferase superfamily. LaeA methyltransferase family. In terms of assembly, component of the heterotrimeric velvet complex composed of laeA, veA and velB; VeA acting as a bridging protein between laeA and velB.

The protein resides in the nucleus. It carries out the reaction L-methionyl-[protein] + S-adenosyl-L-methionine = S-methyl-L-methionyl-[protein] + S-adenosyl-L-homocysteine. In terms of biological role, methyltransferase; component of the velvet transcription factor complex that acts as a global regulator for secondary metabolite gene expression. Controls the expression of the chaetoglobosin A biosynthesis cluster via the cheR transcription factor and the subsequent production of chaetoglobosin A. Positively regulates the expression of smtA and negatively regulates the expression of velB. LaeA also regulates pigmentation and spores production. This Chaetomium globosum (strain ATCC 6205 / CBS 148.51 / DSM 1962 / NBRC 6347 / NRRL 1970) (Soil fungus) protein is Protein-methionine methyltransferase laeA.